The chain runs to 196 residues: dTTP/UTP pyrophosphatase (196 aa).

The active-site Proton acceptor is the Asp-72.

Belongs to the Maf family. YhdE subfamily. Requires a divalent metal cation as cofactor.

The protein localises to the cytoplasm. It carries out the reaction dTTP + H2O = dTMP + diphosphate + H(+). The catalysed reaction is UTP + H2O = UMP + diphosphate + H(+). In terms of biological role, nucleoside triphosphate pyrophosphatase that hydrolyzes dTTP and UTP. May have a dual role in cell division arrest and in preventing the incorporation of modified nucleotides into cellular nucleic acids. The polypeptide is dTTP/UTP pyrophosphatase (Chlamydia trachomatis serovar L2 (strain ATCC VR-902B / DSM 19102 / 434/Bu)).